The primary structure comprises 313 residues: Putative S-adenosyl-L-methionine-dependent methyltransferase MAV_5150 (313 aa).

Residues Asp-139 and 168–169 contribute to the S-adenosyl-L-methionine site; that span reads DL.

This sequence belongs to the UPF0677 family.

Its function is as follows. Exhibits S-adenosyl-L-methionine-dependent methyltransferase activity. This is Putative S-adenosyl-L-methionine-dependent methyltransferase MAV_5150 from Mycobacterium avium (strain 104).